A 930-amino-acid polypeptide reads, in one-letter code: Semaphorin-6C (930 aa).

The N-terminal stretch at Met-1–Ala-24 is a signal peptide. Topologically, residues Ala-25–Pro-604 are extracellular. In terms of domain architecture, Sema spans Pro-30 to Leu-516. A glycan (N-linked (GlcNAc...) asparagine) is linked at Asn-70. 4 cysteine pairs are disulfide-bonded: Cys-111–Cys-121, Cys-139–Cys-148, Cys-262–Cys-373, and Cys-287–Cys-332. N-linked (GlcNAc...) asparagine glycosylation occurs at Asn-286. Asn-437 is a glycosylation site (N-linked (GlcNAc...) asparagine). 4 cysteine pairs are disulfide-bonded: Cys-479-Cys-510, Cys-519-Cys-537, Cys-525-Cys-570, and Cys-529-Cys-545. The interval Thr-554–Pro-593 is disordered. The chain crosses the membrane as a helical span at residues Leu-605–Val-625. Residues Ser-626–Phe-930 are Cytoplasmic-facing. Disordered regions lie at residues Leu-654 to Val-674, Gly-716 to Ala-761, His-775 to His-882, and Ser-908 to Phe-930. Low complexity predominate over residues Ala-829–Leu-844.

Belongs to the semaphorin family. As to expression, in adult tissues, expressed only in skeletal muscle.

It localises to the cell membrane. Its function is as follows. Shows growth cone collapsing activity on dorsal root ganglion (DRG) neurons in vitro. May be a stop signal for the DRG neurons in their target areas, and possibly also for other neurons. May also be involved in the maintenance and remodeling of neuronal connections. This is Semaphorin-6C (SEMA6C) from Homo sapiens (Human).